A 106-amino-acid chain; its full sequence is MNALSGLRMAQESVGLISVAHQAFVTIAGCGVNALSGLQVAQEFVGLISVAHQAFITIAGCGVNALSGLRMAQESVGLISVAHQAFVTIAGCGVNALSGLRMAREL.

This is an uncharacterized protein from Escherichia coli O157:H7.